A 190-amino-acid polypeptide reads, in one-letter code: Zinc finger C2H2 protein ECU03_0790 (190 aa).

4 consecutive C2H2-type zinc fingers follow at residues 4–27 (RCCFEGCGKSFPRRAKLSDHLNTH), 33–55 (YKCDMCEKSYMKNGHLSVHKKKH), 85–108 (YKCGICGKRYRKRSWFDVHVESHH), and 119–142 (HVCEYCKFEFNKKSNLSTHVRSVH).

The chain is Zinc finger C2H2 protein ECU03_0790 from Encephalitozoon cuniculi (strain GB-M1) (Microsporidian parasite).